The following is a 101-amino-acid chain: Large ribosomal subunit protein bL21 (101 aa).

Belongs to the bacterial ribosomal protein bL21 family. In terms of assembly, part of the 50S ribosomal subunit. Contacts protein L20.

Functionally, this protein binds to 23S rRNA in the presence of protein L20. The protein is Large ribosomal subunit protein bL21 of Magnetococcus marinus (strain ATCC BAA-1437 / JCM 17883 / MC-1).